Consider the following 367-residue polypeptide: 4-hydroxy-3-methylbut-2-en-1-yl diphosphate synthase (flavodoxin) (367 aa).

[4Fe-4S] cluster-binding residues include Cys-268, Cys-271, Cys-303, and Glu-310.

The protein belongs to the IspG family. Requires [4Fe-4S] cluster as cofactor.

It catalyses the reaction (2E)-4-hydroxy-3-methylbut-2-enyl diphosphate + oxidized [flavodoxin] + H2O + 2 H(+) = 2-C-methyl-D-erythritol 2,4-cyclic diphosphate + reduced [flavodoxin]. It functions in the pathway isoprenoid biosynthesis; isopentenyl diphosphate biosynthesis via DXP pathway; isopentenyl diphosphate from 1-deoxy-D-xylulose 5-phosphate: step 5/6. Converts 2C-methyl-D-erythritol 2,4-cyclodiphosphate (ME-2,4cPP) into 1-hydroxy-2-methyl-2-(E)-butenyl 4-diphosphate. The polypeptide is 4-hydroxy-3-methylbut-2-en-1-yl diphosphate synthase (flavodoxin) (Halalkalibacterium halodurans (strain ATCC BAA-125 / DSM 18197 / FERM 7344 / JCM 9153 / C-125) (Bacillus halodurans)).